A 192-amino-acid polypeptide reads, in one-letter code: Large ribosomal subunit protein uL5 (192 aa).

It belongs to the universal ribosomal protein uL5 family. Part of the 50S ribosomal subunit; contacts the 5S rRNA and probably tRNA. Forms a bridge to the 30S subunit in the 70S ribosome.

This is one of the proteins that bind and probably mediate the attachment of the 5S RNA into the large ribosomal subunit, where it forms part of the central protuberance. In the 70S ribosome it contacts protein S13 of the 30S subunit (bridge B1b), connecting the 2 subunits; this bridge is implicated in subunit movement. May contact the P site tRNA; the 5S rRNA and some of its associated proteins might help stabilize positioning of ribosome-bound tRNAs. The sequence is that of Large ribosomal subunit protein uL5 from Aeropyrum pernix (strain ATCC 700893 / DSM 11879 / JCM 9820 / NBRC 100138 / K1).